A 623-amino-acid chain; its full sequence is MYSANHWGGSFEIAADGAAEDDHSRNMDLDRGALSARQHQLDETQQSWLLGPPEAKKKDKYVDLGCVVVKRKLLWWVLWTLLAAFILIGLPVIIAKSIPKKKPHAPPPDQYTDALHKALLFFNAQKSGRLPKNNGIKWRGNSGLSDGSDLTDVKGGLVGGYYDAGDNIKFHFPLAFSMTMLSWSVIEYSAKYKAVGEYDHVRELIKWGTDYLLLTFNSSASTIDKVYSQVGIAKINGTQPDDHYCWNRPEDMAYPRPVQTAGSAPDLGGEMAAALAAASIVFRDNAAYSKKLVNGAAAVYKFARSSGRRTPYSRGNQYIEYYYNSTSYWDEYMWSAAWMYYATGNNTYITFATDPRLPKNAKAFYSILDFSVFSWDNKLPGAELLLSRLRMFLNPGYPYEESLIGYHNTTSMNMCTYFPRFGAFNFTKGGLAQFNHGKGQPLQYTVANSFLAALYADYMESVNVPGWYCGPYFMTVDDLRSFARSQVNYILGDNPKKMSYVVGYGKKYPRRLHHRGASTPHNGIKYSCTGGYKWRDTKGADPNVLVGAMVGGPDKNDQFKDARLTYAQNEPTLVGNAGLVAALVALTNSGRGAGVTAVDKNTMFSAVPPMFPATPPPPSKWKP.

The Cytoplasmic portion of the chain corresponds to 1 to 73; sequence MYSANHWGGS…LGCVVVKRKL (73 aa). The chain crosses the membrane as a helical; Signal-anchor for type II membrane protein span at residues 74–94; the sequence is LWWVLWTLLAAFILIGLPVII. At 95-623 the chain is on the extracellular side; it reads AKSIPKKKPH…TPPPPSKWKP (529 aa). The Nucleophile role is filled by Asp166. N-linked (GlcNAc...) asparagine glycosylation is found at Asn217, Asn236, Asn324, Asn345, Asn408, and Asn425. Residues His513, Asp561, and Glu570 contribute to the active site.

It belongs to the glycosyl hydrolase 9 (cellulase E) family. In terms of tissue distribution, ubiquitous.

The protein localises to the membrane. It carries out the reaction Endohydrolysis of (1-&gt;4)-beta-D-glucosidic linkages in cellulose, lichenin and cereal beta-D-glucans.. The chain is Endoglucanase 12 (GLU3) from Oryza sativa subsp. japonica (Rice).